We begin with the raw amino-acid sequence, 429 residues long: Serine--tRNA ligase (429 aa).

235–237 (TAE) contributes to the L-serine binding site. Residue 266–268 (RSE) participates in ATP binding. Glu289 contributes to the L-serine binding site. 353 to 356 (EISS) provides a ligand contact to ATP. An L-serine-binding site is contributed by Ser389.

Belongs to the class-II aminoacyl-tRNA synthetase family. Type-1 seryl-tRNA synthetase subfamily. In terms of assembly, homodimer. The tRNA molecule binds across the dimer.

The protein localises to the cytoplasm. The enzyme catalyses tRNA(Ser) + L-serine + ATP = L-seryl-tRNA(Ser) + AMP + diphosphate + H(+). It carries out the reaction tRNA(Sec) + L-serine + ATP = L-seryl-tRNA(Sec) + AMP + diphosphate + H(+). Its pathway is aminoacyl-tRNA biosynthesis; selenocysteinyl-tRNA(Sec) biosynthesis; L-seryl-tRNA(Sec) from L-serine and tRNA(Sec): step 1/1. In terms of biological role, catalyzes the attachment of serine to tRNA(Ser). Is also able to aminoacylate tRNA(Sec) with serine, to form the misacylated tRNA L-seryl-tRNA(Sec), which will be further converted into selenocysteinyl-tRNA(Sec). The sequence is that of Serine--tRNA ligase from Haemophilus influenzae (strain PittGG).